Consider the following 583-residue polypeptide: Fumarate reductase flavoprotein subunit (583 aa).

Residues 11 to 15 (GGGGA), 35 to 37 (VSK), 43 to 51 (SHTVSAEGG), 155 to 157 (WFA), and aspartate 211 each bind FAD. Histidine 44 carries the post-translational modification Tele-8alpha-FAD histidine. Active-site residues include histidine 232 and arginine 248. Residues 353–354 (HY), glutamate 377, and 388–394 (RLGSNSL) contribute to the FAD site.

It belongs to the FAD-dependent oxidoreductase 2 family. FRD/SDH subfamily. Part of an enzyme complex containing four subunits: a flavoprotein (FrdA), an iron-sulfur protein (FrdB), and two hydrophobic anchor proteins (FrdC and FrdD). FAD is required as a cofactor.

The protein resides in the cell membrane. It carries out the reaction a quinone + succinate = fumarate + a quinol. The catalysed reaction is a menaquinone + succinate = a menaquinol + fumarate. In Mycobacterium tuberculosis (strain CDC 1551 / Oshkosh), this protein is Fumarate reductase flavoprotein subunit (frdA).